Here is a 136-residue protein sequence, read N- to C-terminus: MSKAKLDDSTQRPLYGERIIEESKIICFDNPNKKRIYEISIQLPEFTCKCPFSGYPDFAKLSIIYQPNLKVYELKSLKLYINSFRDIKISHEEVVNRIMDDLVNEGSPHWIHLNAAFNPRGNVSMQLDIFSGQKKN.

Cysteine 50 functions as the Thioimide intermediate in the catalytic mechanism. Aspartate 57 serves as the catalytic Proton donor. Substrate is bound by residues 72-74 and 91-92; these read YEL and HE.

The protein belongs to the GTP cyclohydrolase I family. QueF type 1 subfamily.

Its subcellular location is the cytoplasm. The enzyme catalyses 7-aminomethyl-7-carbaguanine + 2 NADP(+) = 7-cyano-7-deazaguanine + 2 NADPH + 3 H(+). The protein operates within tRNA modification; tRNA-queuosine biosynthesis. In terms of biological role, catalyzes the NADPH-dependent reduction of 7-cyano-7-deazaguanine (preQ0) to 7-aminomethyl-7-deazaguanine (preQ1). The polypeptide is NADPH-dependent 7-cyano-7-deazaguanine reductase (Prochlorococcus marinus (strain MIT 9301)).